The primary structure comprises 674 residues: Phosphopantothenoylcysteine decarboxylase subunit VHS3 (674 aa).

Disordered regions lie at residues 1-164 (MTNK…SILS), 190-230 (LNSD…RPSV), 348-368 (QHNSIDTSFNSTNSNAGNITG), 384-426 (TSSN…SNVV), and 575-674 (VSAG…LQRS). Polar residues predominate over residues 15-81 (ASNTLSGAEQ…TSGAVVSNTP (67 aa)). Position 90 is a phosphothreonine (T90). The segment covering 106–116 (EQTPPNQVARQ) has biased composition (polar residues). Residues 137–150 (NLKDINTKVPKDGE) show a composition bias toward basic and acidic residues. Polar residues predominate over residues 152 to 164 (SASSFSTPTSILS). A compositionally biased stretch (basic and acidic residues) spans 198 to 212 (SPRKEHPHFYVEDPL). Positions 214-230 (TPSVRSRSNSTSPRPSV) are enriched in low complexity. Polar residues predominate over residues 351 to 368 (SIDTSFNSTNSNAGNITG). The segment covering 384–395 (TSSNSAASQTNN) has biased composition (low complexity). Polar residues predominate over residues 403 to 426 (MASTTGFPSTLGGSRTYSNSSNVV). The segment covering 580-591 (EEEEDEDNDEED) has biased composition (acidic residues). The segment covering 592 to 602 (DNKKNDTGGKD) has biased composition (basic and acidic residues). The span at 603-660 (EDNDDDDDDDDDDDDDDDDDDDDDDDDDDDDDDDDDDDDDDDDDDDDDEDDEDEDEDD) shows a compositional bias: acidic residues. Over residues 661–674 (EGKKKEDKGGLQRS) the composition is skewed to basic and acidic residues.

This sequence belongs to the HFCD (homooligomeric flavin containing Cys decarboxylase) superfamily. As to quaternary structure, interacts with the C-terminal domain of PPZ1. Component of the phosphopantothenoylcysteine decarboxylase (PPCDC) complex, a heterotrimer composed of CAB3, SIS2 and VHS3.

Its function is as follows. Component of the phosphopantothenoylcysteine decarboxylase (PPCDC) involved in the coenzyme A synthesis. Acts as an inhibitory subunit of protein phosphatase PPZ1, which is involved in many cellular processes such as G1-S transition or salt tolerance. This Saccharomyces cerevisiae (strain ATCC 204508 / S288c) (Baker's yeast) protein is Phosphopantothenoylcysteine decarboxylase subunit VHS3 (VHS3).